Reading from the N-terminus, the 327-residue chain is Transcription factor bHLH71 (327 aa).

Disordered regions lie at residues 46–88 (ISEI…NQRM) and 151–176 (AKLNQSVTSSTSQDSNGEQENPHQPS). Positions 65 to 76 (RGKKRRRRKPRV) are enriched in basic residues. Residues 77–88 (CKNEEEAENQRM) show a composition bias toward basic and acidic residues. Positions 85-136 (NQRMTHIAVERNRRRQMNQHLSVLRSLMPQPFAHKGDQASIVGGAIDFIKEL) constitute a bHLH domain. A compositionally biased stretch (polar residues) spans 152–169 (KLNQSVTSSTSQDSNGEQ).

In terms of assembly, homodimer. Interacts with FAMA. In terms of tissue distribution, expressed in leaves, stems, and flowers.

It localises to the nucleus. Transcription factor. May be involved in the differentiation of stomatal guard cells. The chain is Transcription factor bHLH71 (BHLH71) from Arabidopsis thaliana (Mouse-ear cress).